A 138-amino-acid chain; its full sequence is Invertebrate-type lysozyme 6 (138 aa).

An N-terminal signal peptide occupies residues 1–18 (MFVKLCGILAFAVTYASS). In terms of domain architecture, I-type lysozyme spans 19 to 138 (DCLQCICKKE…WNGIKGLGCS (120 aa)). Cystine bridges form between Cys20/Cys106, Cys25/Cys31, Cys36/Cys45, Cys58/Cys86, Cys76/Cys82, and Cys98/Cys120. Glu28 acts as the Proton donor in catalysis. The active-site Nucleophile is the Asp39. Residue 51 to 57 (KLSYYKD) coordinates substrate. Substrate is bound by residues Tyr90 and 113 to 115 (HNG).

Belongs to the glycosyl hydrolase 22 family. Type-I lysozyme subfamily. As to expression, expressed in pharyngeal gland cells and duct projections, coelomocytes and intestine.

It catalyses the reaction Hydrolysis of (1-&gt;4)-beta-linkages between N-acetylmuramic acid and N-acetyl-D-glucosamine residues in a peptidoglycan and between N-acetyl-D-glucosamine residues in chitodextrins.. Functionally, has bacteriolytic activity against Gram-positive bacteria. This Caenorhabditis elegans protein is Invertebrate-type lysozyme 6.